Here is a 236-residue protein sequence, read N- to C-terminus: Phosphoribosylaminoimidazole-succinocarboxamide synthase (236 aa).

It belongs to the SAICAR synthetase family.

It catalyses the reaction 5-amino-1-(5-phospho-D-ribosyl)imidazole-4-carboxylate + L-aspartate + ATP = (2S)-2-[5-amino-1-(5-phospho-beta-D-ribosyl)imidazole-4-carboxamido]succinate + ADP + phosphate + 2 H(+). The protein operates within purine metabolism; IMP biosynthesis via de novo pathway; 5-amino-1-(5-phospho-D-ribosyl)imidazole-4-carboxamide from 5-amino-1-(5-phospho-D-ribosyl)imidazole-4-carboxylate: step 1/2. In Campylobacter jejuni (strain RM1221), this protein is Phosphoribosylaminoimidazole-succinocarboxamide synthase.